The primary structure comprises 525 residues: ATP synthase subunit alpha (525 aa).

Residue 169–176 (GDRQTGKT) coordinates ATP.

It belongs to the ATPase alpha/beta chains family. F-type ATPases have 2 components, CF(1) - the catalytic core - and CF(0) - the membrane proton channel. CF(1) has five subunits: alpha(3), beta(3), gamma(1), delta(1), epsilon(1). CF(0) has three main subunits: a(1), b(2) and c(9-12). The alpha and beta chains form an alternating ring which encloses part of the gamma chain. CF(1) is attached to CF(0) by a central stalk formed by the gamma and epsilon chains, while a peripheral stalk is formed by the delta and b chains.

Its subcellular location is the cell membrane. It catalyses the reaction ATP + H2O + 4 H(+)(in) = ADP + phosphate + 5 H(+)(out). In terms of biological role, produces ATP from ADP in the presence of a proton gradient across the membrane. The alpha chain is a regulatory subunit. This Mycoplasma mycoides subsp. mycoides SC (strain CCUG 32753 / NCTC 10114 / PG1) protein is ATP synthase subunit alpha.